Reading from the N-terminus, the 140-residue chain is Methylglyoxal synthase (140 aa).

The 140-residue stretch at 1–140 (MKIALIAHDK…RGRKGEINGL (140 aa)) folds into the MGS-like domain. Substrate is bound by residues His8, Lys12, 34-37 (TGTT), and 54-55 (SG). Residue Asp60 is the Proton donor/acceptor of the active site. His87 contributes to the substrate binding site.

It belongs to the methylglyoxal synthase family.

It carries out the reaction dihydroxyacetone phosphate = methylglyoxal + phosphate. Its function is as follows. Catalyzes the formation of methylglyoxal from dihydroxyacetone phosphate. The polypeptide is Methylglyoxal synthase (Geobacillus sp. (strain WCH70)).